A 550-amino-acid polypeptide reads, in one-letter code: Gamma-aminobutyric acid receptor subunit beta (550 aa).

Residues 1 to 24 (MRRSKTRRIFHVSITLLLVSTIFC) form the signal peptide. Residues 25–264 (QNGTKPHNNS…FQLRRSVGYF (240 aa)) are Extracellular-facing. Asn26, Asn32, Asn33, Asn45, Asn53, and Asn193 each carry an N-linked (GlcNAc...) asparagine glycan. Cys180 and Cys194 form a disulfide bridge. The next 3 helical transmembrane spans lie at 265–285 (IFQT…SFWI), 292–311 (ARVA…STGV), and 324–344 (IDIY…EYAA). Residues 345–527 (VNYSYWGRER…DVNLIDKYSR (183 aa)) are Cytoplasmic-facing. Positions 405–465 (AMSTSNTAAQ…TTSLKGARPH (61 aa)) are disordered. Positions 406–421 (MSTSNTAAQNNNFEST) are enriched in polar residues. The chain crosses the membrane as a helical span at residues 528-548 (VVFPVCFIVFNLFYWSYYMMV).

Belongs to the ligand-gated ion channel (TC 1.A.9) family. Gamma-aminobutyric acid receptor (TC 1.A.9.5) subfamily.

Its subcellular location is the postsynaptic cell membrane. It is found in the cell membrane. Its function is as follows. GABA, an inhibitory neurotransmitter, mediates neuronal inhibition by binding to the GABA receptor and opening an integral chloride channel. The protein is Gamma-aminobutyric acid receptor subunit beta (gab-1) of Caenorhabditis elegans.